The sequence spans 418 residues: UDP-N-acetylglucosamine 1-carboxyvinyltransferase (418 aa).

22-23 (KN) is a phosphoenolpyruvate binding site. UDP-N-acetyl-alpha-D-glucosamine is bound at residue Arg91. Cys115 acts as the Proton donor in catalysis. Cys115 carries the 2-(S-cysteinyl)pyruvic acid O-phosphothioketal modification. Residues 120 to 124 (RPVDL), 160 to 163 (KVSV), Asp305, and Ile327 contribute to the UDP-N-acetyl-alpha-D-glucosamine site.

Belongs to the EPSP synthase family. MurA subfamily.

The protein localises to the cytoplasm. The catalysed reaction is phosphoenolpyruvate + UDP-N-acetyl-alpha-D-glucosamine = UDP-N-acetyl-3-O-(1-carboxyvinyl)-alpha-D-glucosamine + phosphate. Its pathway is cell wall biogenesis; peptidoglycan biosynthesis. Functionally, cell wall formation. Adds enolpyruvyl to UDP-N-acetylglucosamine. The protein is UDP-N-acetylglucosamine 1-carboxyvinyltransferase of Baumannia cicadellinicola subsp. Homalodisca coagulata.